We begin with the raw amino-acid sequence, 179 residues long: ATP synthase subunit delta (179 aa).

The protein belongs to the ATPase delta chain family. As to quaternary structure, F-type ATPases have 2 components, F(1) - the catalytic core - and F(0) - the membrane proton channel. F(1) has five subunits: alpha(3), beta(3), gamma(1), delta(1), epsilon(1). F(0) has three main subunits: a(1), b(2) and c(10-14). The alpha and beta chains form an alternating ring which encloses part of the gamma chain. F(1) is attached to F(0) by a central stalk formed by the gamma and epsilon chains, while a peripheral stalk is formed by the delta and b chains.

The protein localises to the cell inner membrane. In terms of biological role, f(1)F(0) ATP synthase produces ATP from ADP in the presence of a proton or sodium gradient. F-type ATPases consist of two structural domains, F(1) containing the extramembraneous catalytic core and F(0) containing the membrane proton channel, linked together by a central stalk and a peripheral stalk. During catalysis, ATP synthesis in the catalytic domain of F(1) is coupled via a rotary mechanism of the central stalk subunits to proton translocation. Its function is as follows. This protein is part of the stalk that links CF(0) to CF(1). It either transmits conformational changes from CF(0) to CF(1) or is implicated in proton conduction. The sequence is that of ATP synthase subunit delta from Anaeromyxobacter dehalogenans (strain 2CP-C).